A 502-amino-acid polypeptide reads, in one-letter code: Glycerol kinase (502 aa).

Position 14 (T14) interacts with ADP. The ATP site is built by T14, T15, and S16. Position 14 (T14) interacts with sn-glycerol 3-phosphate. R18 contacts ADP. The sn-glycerol 3-phosphate site is built by R84, E85, Y137, and D247. The glycerol site is built by R84, E85, Y137, D247, and Q248. Residues T269 and G312 each contribute to the ADP site. Residues T269, G312, Q316, and G413 each contribute to the ATP site. G413 and N417 together coordinate ADP.

The protein belongs to the FGGY kinase family. As to quaternary structure, homotetramer and homodimer (in equilibrium). Heterodimer with EIIA-Glc. Binds 1 zinc ion per glycerol kinase EIIA-Glc dimer. The zinc ion is important for dimerization.

It carries out the reaction glycerol + ATP = sn-glycerol 3-phosphate + ADP + H(+). It functions in the pathway polyol metabolism; glycerol degradation via glycerol kinase pathway; sn-glycerol 3-phosphate from glycerol: step 1/1. Activity of this regulatory enzyme is affected by several metabolites. Allosterically and non-competitively inhibited by fructose 1,6-bisphosphate (FBP) and unphosphorylated phosphocarrier protein EIIA-Glc (III-Glc), an integral component of the bacterial phosphotransferase (PTS) system. Its function is as follows. Key enzyme in the regulation of glycerol uptake and metabolism. Catalyzes the phosphorylation of glycerol to yield sn-glycerol 3-phosphate. This is Glycerol kinase from Photorhabdus laumondii subsp. laumondii (strain DSM 15139 / CIP 105565 / TT01) (Photorhabdus luminescens subsp. laumondii).